A 489-amino-acid polypeptide reads, in one-letter code: ATP synthase subunit beta, chloroplastic (489 aa).

Glycine 170–threonine 177 contacts ATP.

The protein belongs to the ATPase alpha/beta chains family. As to quaternary structure, F-type ATPases have 2 components, CF(1) - the catalytic core - and CF(0) - the membrane proton channel. CF(1) has five subunits: alpha(3), beta(3), gamma(1), delta(1), epsilon(1). CF(0) has four main subunits: a(1), b(1), b'(1) and c(9-12).

Its subcellular location is the plastid. The protein localises to the chloroplast thylakoid membrane. It catalyses the reaction ATP + H2O + 4 H(+)(in) = ADP + phosphate + 5 H(+)(out). In terms of biological role, produces ATP from ADP in the presence of a proton gradient across the membrane. The catalytic sites are hosted primarily by the beta subunits. The protein is ATP synthase subunit beta, chloroplastic of Zygnema circumcarinatum (Green alga).